Reading from the N-terminus, the 146-residue chain is Large ribosomal subunit protein uL15 (146 aa).

Basic and acidic residues predominate over residues M1–R18. The disordered stretch occupies residues M1–F58. Gly residues predominate over residues S42–G52.

It belongs to the universal ribosomal protein uL15 family. As to quaternary structure, part of the 50S ribosomal subunit.

Functionally, binds to the 23S rRNA. The sequence is that of Large ribosomal subunit protein uL15 from Oceanobacillus iheyensis (strain DSM 14371 / CIP 107618 / JCM 11309 / KCTC 3954 / HTE831).